A 421-amino-acid polypeptide reads, in one-letter code: 5-methylthioadenosine/S-adenosylhomocysteine deaminase (421 aa).

Positions 60 and 62 each coordinate Zn(2+). The substrate site is built by E89 and H181. H208 contacts Zn(2+). 2 residues coordinate substrate: E211 and D296. D296 is a binding site for Zn(2+).

This sequence belongs to the metallo-dependent hydrolases superfamily. MTA/SAH deaminase family. Zn(2+) serves as cofactor.

The enzyme catalyses S-adenosyl-L-homocysteine + H2O + H(+) = S-inosyl-L-homocysteine + NH4(+). It carries out the reaction S-methyl-5'-thioadenosine + H2O + H(+) = S-methyl-5'-thioinosine + NH4(+). In terms of biological role, catalyzes the deamination of 5-methylthioadenosine and S-adenosyl-L-homocysteine into 5-methylthioinosine and S-inosyl-L-homocysteine, respectively. Is also able to deaminate adenosine. The sequence is that of 5-methylthioadenosine/S-adenosylhomocysteine deaminase from Pyrococcus horikoshii (strain ATCC 700860 / DSM 12428 / JCM 9974 / NBRC 100139 / OT-3).